The primary structure comprises 239 residues: Ribose-5-phosphate isomerase A (239 aa).

Substrate contacts are provided by residues 40 to 43, 96 to 99, and 110 to 113; these read SGST, DGAD, and KGGG. Glu119 acts as the Proton acceptor in catalysis. Substrate is bound at residue Lys137.

Belongs to the ribose 5-phosphate isomerase family. As to quaternary structure, homodimer.

It catalyses the reaction aldehydo-D-ribose 5-phosphate = D-ribulose 5-phosphate. It functions in the pathway carbohydrate degradation; pentose phosphate pathway; D-ribose 5-phosphate from D-ribulose 5-phosphate (non-oxidative stage): step 1/1. Catalyzes the reversible conversion of ribose-5-phosphate to ribulose 5-phosphate. In Methanococcus maripaludis (strain DSM 14266 / JCM 13030 / NBRC 101832 / S2 / LL), this protein is Ribose-5-phosphate isomerase A.